Consider the following 252-residue polypeptide: Ubiquinone biosynthesis O-methyltransferase (252 aa).

Residues R45, G76, D97, and M141 each coordinate S-adenosyl-L-methionine.

It belongs to the methyltransferase superfamily. UbiG/COQ3 family.

The catalysed reaction is a 3-demethylubiquinol + S-adenosyl-L-methionine = a ubiquinol + S-adenosyl-L-homocysteine + H(+). It carries out the reaction a 3-(all-trans-polyprenyl)benzene-1,2-diol + S-adenosyl-L-methionine = a 2-methoxy-6-(all-trans-polyprenyl)phenol + S-adenosyl-L-homocysteine + H(+). The protein operates within cofactor biosynthesis; ubiquinone biosynthesis. In terms of biological role, O-methyltransferase that catalyzes the 2 O-methylation steps in the ubiquinone biosynthetic pathway. The chain is Ubiquinone biosynthesis O-methyltransferase from Caulobacter vibrioides (strain ATCC 19089 / CIP 103742 / CB 15) (Caulobacter crescentus).